We begin with the raw amino-acid sequence, 428 residues long: Histidinol dehydrogenase (428 aa).

Substrate contacts are provided by S234, Q256, and H259. Zn(2+)-binding residues include Q256 and H259. Active-site proton acceptor residues include E323 and H324. Substrate is bound by residues H324, D357, E411, and H416. Residue D357 coordinates Zn(2+). Zn(2+) is bound at residue H416.

Belongs to the histidinol dehydrogenase family. It depends on Zn(2+) as a cofactor.

The enzyme catalyses L-histidinol + 2 NAD(+) + H2O = L-histidine + 2 NADH + 3 H(+). It functions in the pathway amino-acid biosynthesis; L-histidine biosynthesis; L-histidine from 5-phospho-alpha-D-ribose 1-diphosphate: step 9/9. Its function is as follows. Catalyzes the sequential NAD-dependent oxidations of L-histidinol to L-histidinaldehyde and then to L-histidine. The protein is Histidinol dehydrogenase of Campylobacter jejuni (strain RM1221).